A 79-amino-acid chain; its full sequence is uncharacterized protein (79 aa).

Positions 1–19 (MKYVALAFVLSLVILQISA) are cleaved as a signal peptide. Positions 52-71 (RGRKSRTQSGRNQGKSTSDS) are disordered. Residues 58-71 (TQSGRNQGKSTSDS) show a composition bias toward polar residues.

In terms of tissue distribution, nacreous layer of shell (at protein level). Expressed primarily in the mantle with highest level in the mantle pallium and lower level in the mantle edge.

Its subcellular location is the secreted. This is an uncharacterized protein from Margaritifera margaritifera (Freshwater pearl mussel).